Reading from the N-terminus, the 667-residue chain is Probable oxidoreductase YyaE (667 aa).

Positions 2-59 (SKVHQSACPLNCWDSCGFLVTVDDGKVTKVDGDPNHPITEGKICGRGRMLETKTNSPD) constitute a 4Fe-4S Mo/W bis-MGD-type domain. Positions 9, 13, 17, and 45 each coordinate [4Fe-4S] cluster.

The protein belongs to the prokaryotic molybdopterin-containing oxidoreductase family. The cofactor is Mo-bis(molybdopterin guanine dinucleotide).

This Bacillus subtilis (strain 168) protein is Probable oxidoreductase YyaE (yyaE).